The primary structure comprises 414 residues: tRNA dimethylallyltransferase (414 aa).

Position 33 to 40 (33 to 40 (APTASGKT)) interacts with ATP. 35-40 (TASGKT) lines the substrate pocket. Interaction with substrate tRNA stretches follow at residues 58–61 (DSAL), 182–186 (QRITR), and 266–271 (RCVGYR).

Belongs to the IPP transferase family. As to quaternary structure, monomer. The cofactor is Mg(2+).

The enzyme catalyses adenosine(37) in tRNA + dimethylallyl diphosphate = N(6)-dimethylallyladenosine(37) in tRNA + diphosphate. Catalyzes the transfer of a dimethylallyl group onto the adenine at position 37 in tRNAs that read codons beginning with uridine, leading to the formation of N6-(dimethylallyl)adenosine (i(6)A). This chain is tRNA dimethylallyltransferase, found in Psychrobacter arcticus (strain DSM 17307 / VKM B-2377 / 273-4).